Consider the following 518-residue polypeptide: Uronate isomerase (518 aa).

This sequence belongs to the metallo-dependent hydrolases superfamily. Uronate isomerase family.

The enzyme catalyses D-glucuronate = D-fructuronate. The catalysed reaction is aldehydo-D-galacturonate = keto-D-tagaturonate. The protein operates within carbohydrate metabolism; pentose and glucuronate interconversion. This is Uronate isomerase (uxaC) from Corynebacterium glutamicum (strain ATCC 13032 / DSM 20300 / JCM 1318 / BCRC 11384 / CCUG 27702 / LMG 3730 / NBRC 12168 / NCIMB 10025 / NRRL B-2784 / 534).